We begin with the raw amino-acid sequence, 263 residues long: 3-deoxy-manno-octulosonate cytidylyltransferase (263 aa).

It belongs to the KdsB family.

Its subcellular location is the cytoplasm. It catalyses the reaction 3-deoxy-alpha-D-manno-oct-2-ulosonate + CTP = CMP-3-deoxy-beta-D-manno-octulosonate + diphosphate. It participates in nucleotide-sugar biosynthesis; CMP-3-deoxy-D-manno-octulosonate biosynthesis; CMP-3-deoxy-D-manno-octulosonate from 3-deoxy-D-manno-octulosonate and CTP: step 1/1. The protein operates within bacterial outer membrane biogenesis; lipopolysaccharide biosynthesis. Functionally, activates KDO (a required 8-carbon sugar) for incorporation into bacterial lipopolysaccharide in Gram-negative bacteria. In Burkholderia thailandensis (strain ATCC 700388 / DSM 13276 / CCUG 48851 / CIP 106301 / E264), this protein is 3-deoxy-manno-octulosonate cytidylyltransferase.